We begin with the raw amino-acid sequence, 38 residues long: MKKVTSLKKRSDNCKIVKRKGCLRIINKLNPKFKQKQG.

Belongs to the bacterial ribosomal protein bL36 family.

This chain is Large ribosomal subunit protein bL36, found in Karelsulcia muelleri (strain GWSS) (Sulcia muelleri).